An 82-amino-acid chain; its full sequence is Small ribosomal subunit protein uS17 (82 aa).

It belongs to the universal ribosomal protein uS17 family. Part of the 30S ribosomal subunit.

In terms of biological role, one of the primary rRNA binding proteins, it binds specifically to the 5'-end of 16S ribosomal RNA. The protein is Small ribosomal subunit protein uS17 of Pelobacter propionicus (strain DSM 2379 / NBRC 103807 / OttBd1).